We begin with the raw amino-acid sequence, 167 residues long: N-alpha-acetyltransferase (167 aa).

One can recognise an N-acetyltransferase domain in the interval 12–167 (YRIRNARLTD…EDAYLMAAPL (156 aa)). Tyr-37 lines the substrate pocket. A Zn(2+)-binding site is contributed by His-88. Acetyl-CoA contacts are provided by residues 92 to 94 (IAV) and 100 to 105 (RLGIGT). Glu-127 is a Zn(2+) binding site. Residues Asn-132 and 139–141 (YKK) contribute to the acetyl-CoA site. Tyr-154 is a substrate binding site.

The protein belongs to the acetyltransferase family. ARD1 subfamily. Homodimer.

Its subcellular location is the cytoplasm. The enzyme catalyses N-terminal L-alanyl-[protein] + acetyl-CoA = N-terminal N(alpha)-acetyl-L-alanyl-[protein] + CoA + H(+). The catalysed reaction is N-terminal L-seryl-[protein] + acetyl-CoA = N-terminal N(alpha)-acetyl-L-seryl-[protein] + CoA + H(+). It carries out the reaction N-terminal L-methionyl-L-leucyl-[protein] + acetyl-CoA = N-terminal N(alpha)-acetyl-L-methionyl-L-leucyl-[protein] + CoA + H(+). It catalyses the reaction N-terminal L-methionyl-L-glutamyl-[protein] + acetyl-CoA = N-terminal N(alpha)-acetyl-L-methionyl-L-glutamyl-[protein] + CoA + H(+). Functionally, displays alpha (N-terminal) acetyltransferase activity. Catalyzes the covalent attachment of an acetyl moiety from acetyl-CoA to the free alpha-amino group at the N-terminus of a protein. This chain is N-alpha-acetyltransferase, found in Sulfurisphaera tokodaii (strain DSM 16993 / JCM 10545 / NBRC 100140 / 7) (Sulfolobus tokodaii).